A 402-amino-acid chain; its full sequence is MTEALGTETPGMRNFTINFGPQHPAAHGVLRLVLELDGEVVERVDPHIGLLHRGTEKLIEQKTYLQAIPYFDRLDYVAPMNQEHAFCLAAEKLLGIAVPRRGQLIRVLYCEIGRILSHLLNVTTQALDVGALTPPLWGFEEREKLMMFYERASGSRMHAAYFRIGGVHQDLPPKLIDDIDAWCDPFLQVVADLDALLTDSRIFKQRNVDIGVVSLKQAWEWGFSGVMVRGSGAAWDLRKAQPYECYAEMDFDIPIGKNGDCYDRYLIRMEEMRQSARIMKQCIAKLRAADGQGPVAVEDNKIFPPRRAEMKRSMEALIHHFKLYTEGFRVPAGEVYAAVEAPKGEFGVFLVSDGSNKPYKCKIRAPGFAHLQAMDFICRGHLLADVSAILGSLDIVFGEVDR.

It belongs to the complex I 49 kDa subunit family. As to quaternary structure, NDH-1 is composed of 14 different subunits. Subunits NuoB, C, D, E, F, and G constitute the peripheral sector of the complex.

It localises to the cell inner membrane. The enzyme catalyses a quinone + NADH + 5 H(+)(in) = a quinol + NAD(+) + 4 H(+)(out). Functionally, NDH-1 shuttles electrons from NADH, via FMN and iron-sulfur (Fe-S) centers, to quinones in the respiratory chain. The immediate electron acceptor for the enzyme in this species is believed to be ubiquinone. Couples the redox reaction to proton translocation (for every two electrons transferred, four hydrogen ions are translocated across the cytoplasmic membrane), and thus conserves the redox energy in a proton gradient. The chain is NADH-quinone oxidoreductase subunit D 2 from Nitrobacter hamburgensis (strain DSM 10229 / NCIMB 13809 / X14).